The chain runs to 354 residues: Aspartate carbamoyltransferase catalytic subunit (354 aa).

Positions 67 and 68 each coordinate carbamoyl phosphate. K95 is a binding site for L-aspartate. The carbamoyl phosphate site is built by R117, H150, and Q153. Residues R190 and R261 each coordinate L-aspartate. Carbamoyl phosphate-binding residues include G302 and P303.

Belongs to the aspartate/ornithine carbamoyltransferase superfamily. ATCase family. Heterododecamer (2C3:3R2) of six catalytic PyrB chains organized as two trimers (C3), and six regulatory PyrI chains organized as three dimers (R2).

The enzyme catalyses carbamoyl phosphate + L-aspartate = N-carbamoyl-L-aspartate + phosphate + H(+). It functions in the pathway pyrimidine metabolism; UMP biosynthesis via de novo pathway; (S)-dihydroorotate from bicarbonate: step 2/3. Its function is as follows. Catalyzes the condensation of carbamoyl phosphate and aspartate to form carbamoyl aspartate and inorganic phosphate, the committed step in the de novo pyrimidine nucleotide biosynthesis pathway. The polypeptide is Aspartate carbamoyltransferase catalytic subunit (Synechococcus sp. (strain RCC307)).